Consider the following 294-residue polypeptide: Homeobox protein Nkx-2.5 (294 aa).

2 disordered regions span residues 48-69 (GSEP…PAAF) and 102-122 (EQEK…RRKP). The span at 52–69 (PALPELPEPPPAKPPAAF) shows a compositional bias: pro residues. The segment covering 102-114 (EQEKRELEDPERP) has biased composition (basic and acidic residues). The segment at residues 119–178 (RRKPRVLFSQAQVYELERRFKQQKYLSAPERDHLANVLKLTSTQVKIWFQNRRYKCKRQR) is a DNA-binding region (homeobox).

The protein belongs to the NK-2 homeobox family. As to quaternary structure, homodimer (via the homeobox); binds DNA as homodimer.

The protein localises to the nucleus. Its function is as follows. Transcription factor required for the development of the heart and the spleen. Implicated in commitment to and/or differentiation of the myocardial lineage. Binds to the core DNA motif of promoter. This Gallus gallus (Chicken) protein is Homeobox protein Nkx-2.5 (NKX-2.5).